Reading from the N-terminus, the 400-residue chain is Cysteine desulfurase (400 aa).

Pyridoxal 5'-phosphate contacts are provided by residues 71 to 72 (GT), Asn150, Gln178, and 198 to 200 (SGH). Lys201 bears the N6-(pyridoxal phosphate)lysine mark. Thr236 lines the pyridoxal 5'-phosphate pocket. Cys324 acts as the Cysteine persulfide intermediate in catalysis. [2Fe-2S] cluster is bound at residue Cys324.

Belongs to the class-V pyridoxal-phosphate-dependent aminotransferase family. NifS/IscS subfamily. In terms of assembly, homodimer. The cofactor is pyridoxal 5'-phosphate.

It catalyses the reaction (sulfur carrier)-H + L-cysteine = (sulfur carrier)-SH + L-alanine. Its function is as follows. Catalyzes the removal of elemental sulfur atoms from cysteine to produce alanine. Seems to participate in the biosynthesis of the nitrogenase metalloclusters by providing the inorganic sulfur required for the Fe-S core formation. The chain is Cysteine desulfurase from Nostoc sp. (strain PCC 7120 / SAG 25.82 / UTEX 2576).